Consider the following 211-residue polypeptide: Soluble inorganic pyrophosphatase PPA1 (211 aa).

Residues Lys-61 and Arg-75 each contribute to the substrate site. The active-site Proton donor is the Tyr-83. Substrate is bound at residue Tyr-87. 3 residues coordinate Mg(2+): Asp-97, Asp-102, and Asp-134. Residue Tyr-171 participates in substrate binding.

This sequence belongs to the PPase family. The cofactor is Mg(2+).

The protein resides in the cytoplasm. The enzyme catalyses diphosphate + H2O = 2 phosphate + H(+). Strongly inhibited by Ca(2+). Its function is as follows. Catalyzes the irreversible hydrolysis of pyrophosphate (PPi) to phosphate. The sequence is that of Soluble inorganic pyrophosphatase PPA1 from Solanum tuberosum (Potato).